The following is a 128-amino-acid chain: Regulator of ribonuclease activity B (128 aa).

This sequence belongs to the RraB family. As to quaternary structure, interacts with the C-terminal region of Rne.

It is found in the cytoplasm. Globally modulates RNA abundance by binding to RNase E (Rne) and regulating its endonucleolytic activity. Can modulate Rne action in a substrate-dependent manner by altering the composition of the degradosome. This chain is Regulator of ribonuclease activity B, found in Idiomarina loihiensis (strain ATCC BAA-735 / DSM 15497 / L2-TR).